The following is a 973-amino-acid chain: MAGRVPSLLVLLVFPSSCLAFRSPLSVFKRFKETTRPFSNECLGTTRPVVPIDSSDFALDIRMPGVTPKQSDTYFCMSMRIPVDEEAFVIDFKPRASMDTVHHMLLFGCNMPSSTGSYWFCDEGTCTDKANILYAWARNAPPTRLPKGVGFRVGGETGSKYFVLQVHYGDISAFRDNNKDCSGVSLHLTRLPQPLIAGMYLMMSVDTVIPAGEKVVNSDISCHYKNYPMHVFAYRVHTHHLGKVVSGYRVRNGQWTLIGRQSPQLPQAFYPVGHPVDVSFGDLLAARCVFTGEGRTEATHIGGTSSDEMCNLYIMYYMEAKHAVSFMTCTQNVAPDMFRTIPPEANIPIPVKSDMVMMHEHHKETEYKDKIPLLQQPKREEEEVLDQGDFYSLLSKLLGEREDVVHVHKYNPTEKAESESDLVAEIANVVQKKDLGRSDAREGAEHERGNAILVRDRIHKFHRLVSTLRPPESRVFSLQQPPPGEGTWEPEHTGDFHMEEALDWPGVYLLPGQVSGVALDPKNNLVIFHRGDHVWDGNSFDSKFVYQQIGLGPIEEDTILVIDPNNAAVLQSSGKNLFYLPHGLSIDKDGNYWVTDVALHQVFKLDPNNKEGPVLILGRSMQPGSDQNHFCQPTDVAVDPGTGAIYVSDGYCNSRIVQFSPSGKFITQWGEESSGSSPLPGQFTVPHSLALVPLLGQLCVADRENGRIQCFKTDTKEFVREIKHSSFGRNVFAISYIPGLLFAVNGKPHFGDQEPVQGFVMNFSNGEIIDIFKPVRKHFDMPHDIVASEDGTVYIGDAHTNTVWKFTLTEKLEHRSVKKAGIEVQEIKEAEAVVETKMENKPTSSELQKMQEKQKLIKEPGSGVPVVLITTLLVIPVVVLLAIAIFIRWKKSRAFGDSEHKLETSSGRVLGRFRGKGSGGLNLGNFFASRKGYSRKGFDRLSTEGSDQEKEDDGSESEEEYSAPLPALAPSSS.

The signal sequence occupies residues 1–20 (MAGRVPSLLVLLVFPSSCLA). The interval 1 to 494 (MAGRVPSLLV…EGTWEPEHTG (494 aa)) is peptidylglycine alpha-hydroxylating monooxygenase. Residues 21–30 (FRSPLSVFKR) constitute a propeptide that is removed on maturation. Topologically, residues 31-863 (FKETTRPFSN…QKLIKEPGSG (833 aa)) are intragranular. 5 disulfides stabilise this stretch: Cys-42/Cys-181, Cys-76/Cys-121, Cys-109/Cys-126, Cys-222/Cys-329, and Cys-288/Cys-310. The Cu(2+) site is built by His-102 and His-103. Residues His-167, His-237, His-239, and Met-309 each contribute to the Cu(2+) site. Positions 495–817 (DFHMEEALDW…LTEKLEHRSV (323 aa)) are peptidyl-alpha-hydroxyglycine alpha-amidating lyase. NHL repeat units follow at residues 498–541 (MEEA…NSFD), 567–608 (AAVL…LDPN), 617–662 (LGRS…FSPS), and 670–714 (GEES…FKTD). Val-517 contributes to the Ca(2+) binding site. Position 530 (Arg-530) interacts with a protein. His-582 contributes to the Zn(2+) binding site. Leu-584 is a binding site for Ca(2+). Cysteines 631 and 652 form a disulfide. Residue Tyr-651 participates in a protein binding. Zn(2+) is bound at residue His-687. Cysteines 699 and 710 form a disulfide. Arg-703 provides a ligand contact to a protein. The N-linked (GlcNAc...) asparagine glycan is linked to Asn-762. Residues 766–809 (GEIIDIFKPVRKHFDMPHDIVASEDGTVYIGDAHTNTVWKFTLT) form an NHL 5 repeat. His-783 serves as a coordination point for Zn(2+). Residue Asp-784 coordinates Ca(2+). Residues 864-887 (VPVVLITTLLVIPVVVLLAIAIFI) form a helical membrane-spanning segment. Residues Ile-875 and Arg-893 each carry the sulfotyrosine modification. At 888-973 (RWKKSRAFGD…PLPALAPSSS (86 aa)) the chain is on the cytoplasmic side. 3 positions are modified to phosphoserine: Ser-918, Ser-929, and Ser-942. The interval 925–942 (NFFASRKGYSRKGFDRLS) is interaction with RASSF9. The interval 937–973 (GFDRLSTEGSDQEKEDDGSESEEEYSAPLPALAPSSS) is disordered. At Thr-943 the chain carries Phosphothreonine. Ser-946 is modified (phosphoserine; by UHMK1; in vitro). A compositionally biased stretch (acidic residues) spans 949–961 (EKEDDGSESEEEY). Phosphoserine is present on Ser-957. Residues 962–973 (SAPLPALAPSSS) show a composition bias toward low complexity.

This sequence in the C-terminal section; belongs to the peptidyl-alpha-hydroxyglycine alpha-amidating lyase family. In the N-terminal section; belongs to the copper type II ascorbate-dependent monooxygenase family. Monomer. Interacts with RASSF9. It depends on Zn(2+) as a cofactor. Requires Cu(2+) as cofactor.

The protein resides in the cytoplasmic vesicle. Its subcellular location is the secretory vesicle membrane. The protein localises to the membrane. It localises to the secreted. It catalyses the reaction a [peptide]-C-terminal glycine + 2 L-ascorbate + O2 = a [peptide]-C-terminal (2S)-2-hydroxyglycine + 2 monodehydro-L-ascorbate radical + H2O. It carries out the reaction a [peptide]-C-terminal (2S)-2-hydroxyglycine = a [peptide]-C-terminal amide + glyoxylate. The catalysed reaction is N-dodecanoylglycine + 2 L-ascorbate + O2 = N-dodecanoyl-(2S)-hydroxyglycine + 2 monodehydro-L-ascorbate radical + H2O. The enzyme catalyses N-dodecanoyl-(2S)-hydroxyglycine = dodecanamide + glyoxylate. It catalyses the reaction N-(9Z,12Z,15Z)-octadecatrienoylglycine + 2 L-ascorbate + O2 = N-(9Z,12Z,15Z)-octadecatrienoyl-(2S)-hydroxyglycine + 2 monodehydro-L-ascorbate radical + H2O. It carries out the reaction N-(9Z,12Z,15Z)-octadecatrienoyl-(2S)-hydroxyglycine = (9Z,12Z,15Z)-octadecatrienamide + glyoxylate. The catalysed reaction is N-(9Z-octadecenoyl)glycine + 2 L-ascorbate + O2 = N-(9Z-octadecenoyl)-(2S)-hydroxyglycine + 2 monodehydro-L-ascorbate radical + H2O. The enzyme catalyses N-(9Z-octadecenoyl)-(2S)-hydroxyglycine = (9Z)-octadecenamide + glyoxylate. It catalyses the reaction N-tetradecanoylglycine + 2 L-ascorbate + O2 = N-tetradecanoyl-(2S)-hydroxyglycine + 2 monodehydro-L-ascorbate radical + H2O. It carries out the reaction N-tetradecanoyl-(2S)-hydroxyglycine = tetradecamide + glyoxylate. The catalysed reaction is N-decanoylglycine + 2 L-ascorbate + O2 = N-decanoyl-(2S)-hydroxyglycine + 2 monodehydro-L-ascorbate radical + H2O. The enzyme catalyses N-decanoyl-(2S)-hydroxyglycine = decanamide + glyoxylate. It catalyses the reaction N-octanoylglycine + 2 L-ascorbate + O2 = N-octanoyl-(2S)-hydroxyglycine + 2 monodehydro-L-ascorbate radical + H2O. It carries out the reaction N-octanoyl-(2S)-hydroxyglycine = octanamide + glyoxylate. With respect to regulation, PAM activity is inhibited by EDTA, phenylglyoxal and diethyl pyrocarbonate. PAL activity is stimulated by cadmium and inhibited by mercury. Bifunctional enzyme that catalyzes amidation of the C-terminus of proteins. Alpha-amidation is present at the C-terminus of many endocrine hormones and neuropeptides and is required for their activity. C-terminal amidation also takes place in response to protein fragmentation triggered by oxidative stress, promoting degradation of amidated protein fragments by the proteasome. Alpha-amidation involves two sequential reactions, both of which are catalyzed by separate catalytic domains of the enzyme. The first step, catalyzed by peptidyl alpha-hydroxylating monooxygenase (PHM) domain, is the copper-, ascorbate-, and O2- dependent stereospecific hydroxylation (with S stereochemistry) at the alpha-carbon (C-alpha) of the C-terminal glycine of the peptidylglycine substrate. The second step, catalyzed by the peptidylglycine amidoglycolate lyase (PAL) domain, is the zinc-dependent cleavage of the N-C-alpha bond, producing the alpha-amidated peptide and glyoxylate. Similarly, catalyzes the two-step conversion of an N-fatty acylglycine to a primary fatty acid amide and glyoxylate. This is Peptidyl-glycine alpha-amidating monooxygenase from Homo sapiens (Human).